The following is a 275-amino-acid chain: Fructose-2,6-bisphosphatase TIGAR (275 aa).

The active-site Tele-phosphohistidine intermediate is His11. The active-site Proton donor/acceptor is the Glu89.

This sequence belongs to the phosphoglycerate mutase family.

Its subcellular location is the cytoplasm. It is found in the nucleus. It localises to the mitochondrion. It catalyses the reaction beta-D-fructose 2,6-bisphosphate + H2O = beta-D-fructose 6-phosphate + phosphate. Its function is as follows. Fructose-bisphosphatase hydrolyzing fructose-2,6-bisphosphate as well as fructose-1,6-bisphosphate. Acts as a negative regulator of glycolysis by lowering intracellular levels of fructose-2,6-bisphosphate in a p53/TP53-dependent manner, resulting in the pentose phosphate pathway (PPP) activation and NADPH production. Contributes to the generation of reduced glutathione to cause a decrease in intracellular reactive oxygen species (ROS) content, correlating with its ability to protect cells from oxidative or metabolic stress-induced cell death. May play a role in mitophagy inhibition. The protein is Fructose-2,6-bisphosphatase TIGAR of Xenopus laevis (African clawed frog).